The following is a 406-amino-acid chain: Glucose-1-phosphate adenylyltransferase (406 aa).

Alpha-D-glucose 1-phosphate contacts are provided by residues Tyr100, Gly165, 181-182 (EK), and Ser199.

The protein belongs to the bacterial/plant glucose-1-phosphate adenylyltransferase family. Homotetramer.

The enzyme catalyses alpha-D-glucose 1-phosphate + ATP + H(+) = ADP-alpha-D-glucose + diphosphate. It functions in the pathway glycan biosynthesis; glycogen biosynthesis. Its function is as follows. Involved in the biosynthesis of ADP-glucose, a building block required for the elongation reactions to produce glycogen. Catalyzes the reaction between ATP and alpha-D-glucose 1-phosphate (G1P) to produce pyrophosphate and ADP-Glc. This is Glucose-1-phosphate adenylyltransferase from Streptomyces avermitilis (strain ATCC 31267 / DSM 46492 / JCM 5070 / NBRC 14893 / NCIMB 12804 / NRRL 8165 / MA-4680).